A 735-amino-acid polypeptide reads, in one-letter code: Catalase-peroxidase (735 aa).

Polar residues predominate over residues 1 to 26 (MENQNRQNASQCPFHGSITNQSSNRT). A disordered region spans residues 1 to 29 (MENQNRQNASQCPFHGSITNQSSNRTTNK). Residues 100–223 (WHSAGTYRIG…LAASVMGLIY (124 aa)) constitute a cross-link (tryptophyl-tyrosyl-methioninium (Trp-Tyr) (with M-249)). Histidine 101 functions as the Proton acceptor in the catalytic mechanism. A cross-link (tryptophyl-tyrosyl-methioninium (Tyr-Met) (with W-100)) is located at residues 223–249 (YVNPEGPDGKPDPKAAARDIRETFRRM). Histidine 264 lines the heme b pocket.

It belongs to the peroxidase family. Peroxidase/catalase subfamily. Homodimer or homotetramer. It depends on heme b as a cofactor. Formation of the three residue Trp-Tyr-Met cross-link is important for the catalase, but not the peroxidase activity of the enzyme.

The enzyme catalyses H2O2 + AH2 = A + 2 H2O. It carries out the reaction 2 H2O2 = O2 + 2 H2O. Bifunctional enzyme with both catalase and broad-spectrum peroxidase activity. In Geobacillus thermodenitrificans (strain NG80-2), this protein is Catalase-peroxidase.